The primary structure comprises 188 residues: Elongation factor P (188 aa).

The protein belongs to the elongation factor P family.

The protein localises to the cytoplasm. It functions in the pathway protein biosynthesis; polypeptide chain elongation. In terms of biological role, involved in peptide bond synthesis. Stimulates efficient translation and peptide-bond synthesis on native or reconstituted 70S ribosomes in vitro. Probably functions indirectly by altering the affinity of the ribosome for aminoacyl-tRNA, thus increasing their reactivity as acceptors for peptidyl transferase. In Rhodospirillum centenum (strain ATCC 51521 / SW), this protein is Elongation factor P.